The chain runs to 55 residues: uncharacterized protein (55 aa).

Residues 17 to 44 (QNVNIALTKKRLDTAQQNADQTLKMIQH) adopt a coiled-coil conformation.

This is an uncharacterized protein from Bacillus subtilis (strain 168).